A 300-amino-acid chain; its full sequence is UPF0282 protein TON_1363 (300 aa).

The protein belongs to the UPF0282 family.

The protein is UPF0282 protein TON_1363 of Thermococcus onnurineus (strain NA1).